We begin with the raw amino-acid sequence, 207 residues long: 8-oxoguanine DNA glycosylase/AP lyase (207 aa).

Catalysis depends on residues K129 and D147.

This sequence belongs to the type-2 OGG1 family.

It carries out the reaction 2'-deoxyribonucleotide-(2'-deoxyribose 5'-phosphate)-2'-deoxyribonucleotide-DNA = a 3'-end 2'-deoxyribonucleotide-(2,3-dehydro-2,3-deoxyribose 5'-phosphate)-DNA + a 5'-end 5'-phospho-2'-deoxyribonucleoside-DNA + H(+). Catalyzes the excision of an oxidatively damaged form of guanine (7,8-dihydro-8-oxoguanine = 8-oxoG) from DNA. Also cleaves the DNA backbone at apurinic/apyrimidinic sites (AP sites). This chain is 8-oxoguanine DNA glycosylase/AP lyase, found in Thermotoga sp. (strain RQ2).